A 170-amino-acid polypeptide reads, in one-letter code: Vimentin A1 (170 aa).

Residues 1-10 (DLTEAANKSN) are compositionally biased toward polar residues. The tract at residues 1–20 (DLTEAANKSNEALRLAKQES) is disordered. Positions 1 to 111 (DLTEAANKSN…ATYRKLLEGE (111 aa)) are coil 2. The IF rod domain maps to 1–115 (DLTEAANKSN…KLLEGEESRI (115 aa)). The tract at residues 112-170 (ESRISTPLPNFSSFNLRETMLELKPNIESTFTKKVLIKTIETRDGQVLNESTQNHDDLE) is tail.

The protein belongs to the intermediate filament family. Homomer. In terms of processing, one of the most prominent phosphoproteins in various cells of mesenchymal origin. Phosphorylation is enhanced during cell division, at which time vimentin filaments are significantly reorganized. In terms of tissue distribution, expressed in low amounts in retina, optic nerve, and brain and in higher amounts in spinal cord.

Its function is as follows. Vimentins are class-III intermediate filaments found in various non-epithelial cells, especially mesenchymal cells. Vimentin is attached to the nucleus, endoplasmic reticulum, and mitochondria, either laterally or terminally. The polypeptide is Vimentin A1 (Carassius auratus (Goldfish)).